The following is an 841-amino-acid chain: Protein translocase subunit SecA (841 aa).

ATP-binding positions include glutamine 85, 103–107 (GEGKT), and aspartate 492. Positions 788-841 (EVVQGQTTAHQPQEGDEEKTVKKKPVRKVVDIGRNSPCHCGSGKKYKNCHGKTE) are disordered. Positions 825, 827, 836, and 837 each coordinate Zn(2+). Positions 829–841 (SGKKYKNCHGKTE) are enriched in basic residues.

Belongs to the SecA family. As to quaternary structure, monomer and homodimer. Part of the essential Sec protein translocation apparatus which comprises SecA, SecYEG and auxiliary proteins SecDF. Other proteins may also be involved. Zn(2+) is required as a cofactor.

The protein localises to the cell membrane. It localises to the cytoplasm. It catalyses the reaction ATP + H2O + cellular proteinSide 1 = ADP + phosphate + cellular proteinSide 2.. In terms of biological role, part of the Sec protein translocase complex. Interacts with the SecYEG preprotein conducting channel. Has a central role in coupling the hydrolysis of ATP to the transfer of proteins into and across the cell membrane, serving as an ATP-driven molecular motor driving the stepwise translocation of polypeptide chains across the membrane. This is Protein translocase subunit SecA from Bacillus pumilus (strain SAFR-032).